The sequence spans 599 residues: Glutamine--fructose-6-phosphate aminotransferase [isomerizing] (599 aa).

Cysteine 2 (nucleophile; for GATase activity) is an active-site residue. Positions 2–223 (CGIIGYIGNE…DRDIVILRKE (222 aa)) constitute a Glutamine amidotransferase type-2 domain. SIS domains are found at residues 286-423 (LGKE…IIGK) and 452-589 (IAEE…VDKP). Residue lysine 594 is the For Fru-6P isomerization activity of the active site.

Homodimer.

It is found in the cytoplasm. The catalysed reaction is D-fructose 6-phosphate + L-glutamine = D-glucosamine 6-phosphate + L-glutamate. Its function is as follows. Catalyzes the first step in hexosamine metabolism, converting fructose-6P into glucosamine-6P using glutamine as a nitrogen source. The chain is Glutamine--fructose-6-phosphate aminotransferase [isomerizing] (glmS) from Methanococcus maripaludis (strain DSM 14266 / JCM 13030 / NBRC 101832 / S2 / LL).